The following is a 231-amino-acid chain: 2-C-methyl-D-erythritol 4-phosphate cytidylyltransferase (231 aa).

This sequence belongs to the IspD/TarI cytidylyltransferase family. IspD subfamily. Homodimer.

It carries out the reaction 2-C-methyl-D-erythritol 4-phosphate + CTP + H(+) = 4-CDP-2-C-methyl-D-erythritol + diphosphate. The protein operates within isoprenoid biosynthesis; isopentenyl diphosphate biosynthesis via DXP pathway; isopentenyl diphosphate from 1-deoxy-D-xylulose 5-phosphate: step 2/6. In terms of biological role, catalyzes the formation of 4-diphosphocytidyl-2-C-methyl-D-erythritol from CTP and 2-C-methyl-D-erythritol 4-phosphate (MEP). The polypeptide is 2-C-methyl-D-erythritol 4-phosphate cytidylyltransferase (Citrobacter koseri (strain ATCC BAA-895 / CDC 4225-83 / SGSC4696)).